Consider the following 661-residue polypeptide: Transketolase (661 aa).

The residue at position 2 (Ser-2) is an N-acetylserine. A substrate-binding site is contributed by His-31. Residues His-71 and 119 to 121 (GPL) each bind thiamine diphosphate. Asp-160 contributes to the Mg(2+) binding site. Gly-161 and Asn-190 together coordinate thiamine diphosphate. Residues Asn-190 and Val-192 each coordinate Mg(2+). Residues His-267, Arg-359, and Ser-386 each coordinate substrate. Position 267 (His-267) interacts with thiamine diphosphate. The active-site Proton donor is Glu-413. Position 439 (Phe-439) interacts with thiamine diphosphate. Residues His-463, Asp-471, and Arg-522 each contribute to the substrate site.

Belongs to the transketolase family. As to quaternary structure, homodimer. Requires Mg(2+) as cofactor. It depends on Ca(2+) as a cofactor. Mn(2+) serves as cofactor. Co(2+) is required as a cofactor. The cofactor is thiamine diphosphate.

The catalysed reaction is D-sedoheptulose 7-phosphate + D-glyceraldehyde 3-phosphate = aldehydo-D-ribose 5-phosphate + D-xylulose 5-phosphate. Its function is as follows. Catalyzes the transfer of a two-carbon ketol group from a ketose donor to an aldose acceptor, via a covalent intermediate with the cofactor thiamine pyrophosphate. The protein is Transketolase (tkt-1) of Dictyostelium discoideum (Social amoeba).